We begin with the raw amino-acid sequence, 759 residues long: Mitogen-activated protein kinase kinase kinase 1a (759 aa).

Composition is skewed to basic and acidic residues over residues 1–17 (MIEE…DRGS), 25–36 (SFEDKGSSHDWK), and 52–64 (AKKD…KVDS). Disordered stretches follow at residues 1 to 90 (MIEE…NLSK), 122 to 160 (LGIE…SHDF), 165 to 184 (SRVD…LAPM), and 195 to 239 (RKHR…PDPL). Residues 72-85 (VHSTSSPRLSPASS) show a composition bias toward low complexity. The region spanning 426 to 679 (WAKGEFLGSG…CDMLLAHPFI (254 aa)) is the Protein kinase domain. ATP-binding positions include 432–440 (LGSGTFGSV) and K454. D549 acts as the Proton acceptor in catalysis.

It belongs to the protein kinase superfamily. STE Ser/Thr protein kinase family. MAP kinase kinase kinase subfamily.

The protein resides in the cell membrane. The enzyme catalyses L-seryl-[protein] + ATP = O-phospho-L-seryl-[protein] + ADP + H(+). It carries out the reaction L-threonyl-[protein] + ATP = O-phospho-L-threonyl-[protein] + ADP + H(+). The CERK1, MEKK1a/b, MKK1a/b/c and MPK4a/b proteins are involved in pathogen defense. The pathway induces rapid growth inhibition, cell wall depositions and accumulation of defense-related transcripts. This protein is required for responses to chitin and acts redundantly with MEKK1b. The protein is Mitogen-activated protein kinase kinase kinase 1a of Physcomitrium patens (Spreading-leaved earth moss).